Reading from the N-terminus, the 187-residue chain is MAHNGRLTVLTGPSGVGKGTLVKRLLDQHPEIWLSVSATTRQPRAGEEEGVSYFFHPRDTFDALVAAGGLLEWAEFASNCYGTPRDPVEEHLAAGRPVLLEIELEGARQVRTSFPDAFQVFLAPPSFAELERRIRGRGTDTEDAIQRRLARAREELNAQNEFDAVVVNDDLDQALKQLETHMQLQAP.

Positions 5 to 183 (GRLTVLTGPS…ALKQLETHMQ (179 aa)) constitute a Guanylate kinase-like domain. 12-19 (GPSGVGKG) contributes to the ATP binding site.

It belongs to the guanylate kinase family.

It localises to the cytoplasm. It catalyses the reaction GMP + ATP = GDP + ADP. The enzyme catalyses dZMP + ATP = dZDP + ADP. It functions in the pathway purine metabolism. Essential for recycling GMP and indirectly, cGMP. Its function is as follows. (Microbial infection) Catalyzes the phosphorylation of dZMP to dZDP, when the bacterium is infected by a phage that produces the substrate for the synthesis of dZTP (2- amino-2'-deoxyadenosine 5'-triphosphate), which is then used by the phage as a DNA polymerase substrate. This Synechococcus sp. (strain CC9902) protein is Guanylate kinase.